Here is a 422-residue protein sequence, read N- to C-terminus: tRNA(Met) cytidine acetate ligase (422 aa).

Residues 7–20 (ITEY…HLYH), Gly102, Asn172, and Arg197 contribute to the ATP site.

This sequence belongs to the TmcAL family.

The protein resides in the cytoplasm. The enzyme catalyses cytidine(34) in elongator tRNA(Met) + acetate + ATP = N(4)-acetylcytidine(34) in elongator tRNA(Met) + AMP + diphosphate. Catalyzes the formation of N(4)-acetylcytidine (ac(4)C) at the wobble position of elongator tRNA(Met), using acetate and ATP as substrates. First activates an acetate ion to form acetyladenylate (Ac-AMP) and then transfers the acetyl group to tRNA to form ac(4)C34. This Halothermothrix orenii (strain H 168 / OCM 544 / DSM 9562) protein is tRNA(Met) cytidine acetate ligase.